Here is a 579-residue protein sequence, read N- to C-terminus: Extracellular serine/threonine protein kinase FAM20C (579 aa).

Residues M1–R10 lie on the Cytoplasmic side of the membrane. Positions M1–Q87 are excised as a propeptide. A helical; Signal-anchor for type II membrane protein membrane pass occupies residues V11–P31. Topologically, residues K32–R579 are lumenal. The disordered stretch occupies residues T38–N79. A compositionally biased stretch (low complexity) spans A49 to A63. A glycan (N-linked (GlcNAc...) asparagine) is linked at N96. The disordered stretch occupies residues K104–L155. Basic and acidic residues-rich tracts occupy residues P111 to E120 and D128 to P140. 3 residues coordinate ATP: Q264, K280, and E301. E301 serves as a coordination point for Mn(2+). The tract at residues F349–G560 is kinase domain. Cystine bridges form between C357-C373 and C362-C366. Position 384-387 (A384–L387) interacts with ATP. 2 cysteine pairs are disulfide-bonded: C421-C495 and C496-C555. D453 is an active-site residue. E458 and D473 together coordinate ATP. D473 lines the Mn(2+) pocket.

It belongs to the FAM20 family. As to quaternary structure, homodimer; disulfide-linked. Interacts with FAM20A; probably forming a heterotetramer of 2 subunits of FAM20A and 2 subunits of FAM20C. Interacts with COPII components SEC23A and SEC24A; transport of FAM20C from the endoplasmic reticulum to the Golgi is likely to be mediated by COPII vesicles. Requires Mn(2+) as cofactor. In terms of processing, N-glycosylation is required for folding. Post-translationally, autophosphorylated. Propeptide cleavage by MBTPS1/S1P promotes FAM20C secretion and maximal kinase activity which is essential for efficient osteoblast differentiation and biomineralization. As to expression, in the mammary gland, expressed at higher levels in lactating mice than in virgin mice (at protein level). Highly expressed in the tooth. No expression in the dental pulp. At the secretory stage of amelogenesis, it is detected in the matrix of the enamel, in the ameloblasts, and within the cells adjoining the stratum intermedium (a tissue layer analogous to the stellate reticulum seen in the developing molar). Strong expression is observed in maturation stage ameloblasts and throughout the non-cornified layers of the gingival epithelium. Expressed at moderate levels in bone and at low levels in kidney, liver, brain and lung. Very low expression, if any, in spleen and skeletal muscle.

It localises to the golgi apparatus membrane. The protein localises to the secreted. It is found in the endoplasmic reticulum. It carries out the reaction L-seryl-[protein] + ATP = O-phospho-L-seryl-[protein] + ADP + H(+). The catalysed reaction is L-threonyl-[protein] + ATP = O-phospho-L-threonyl-[protein] + ADP + H(+). Serine/threonine protein kinase activity is increased upon interaction with FAM20A. Its function is as follows. Golgi serine/threonine protein kinase that phosphorylates secretory pathway proteins within Ser-x-Glu/pSer motifs and plays a key role in biomineralization of bones and teeth. Constitutes the main protein kinase for extracellular proteins, generating the majority of the extracellular phosphoproteome. Mainly phosphorylates proteins within the Ser-x-Glu/pSer motif, but also displays a broader substrate specificity. Phosphorylates ERO1A, enhancing its activity which is required to maintain endoplasmic reticulum redox homeostasis and for oxidative protein folding. During endoplasmic reticulum stress, phosphorylates P4HB/PDIA1 which induces a functional switch, causing P4HB to change from an oxidoreductase to a molecular chaperone. This is critical to maintain ER proteostasis and reduce cell death under ER stress. Phosphorylation of P4HB also promotes its interaction with ERN1, leading to reduced activity of ERN1, a key sensor for the endoplasmic reticulum unfolded protein response. Required for osteoblast differentiation and mineralization. Phosphorylates casein as well as a number of proteins involved in biomineralization such as AMELX, AMTN, ENAM and SPP1. In addition to its role in biomineralization, also plays a role in lipid homeostasis, wound healing and cell migration and adhesion. The polypeptide is Extracellular serine/threonine protein kinase FAM20C (Mus musculus (Mouse)).